Consider the following 100-residue polypeptide: uncharacterized protein (100 aa).

The protein localises to the secreted. This is an uncharacterized protein from Mycobacterium leprae (strain TN).